Here is a 359-residue protein sequence, read N- to C-terminus: Peptide chain release factor 1 (359 aa).

Glutamine 235 is subject to N5-methylglutamine.

The protein belongs to the prokaryotic/mitochondrial release factor family. Methylated by PrmC. Methylation increases the termination efficiency of RF1.

Its subcellular location is the cytoplasm. In terms of biological role, peptide chain release factor 1 directs the termination of translation in response to the peptide chain termination codons UAG and UAA. The polypeptide is Peptide chain release factor 1 (Polynucleobacter necessarius subsp. necessarius (strain STIR1)).